Reading from the N-terminus, the 539-residue chain is uncharacterized protein (539 aa).

The interval 316-433 (AEHHHQKGKK…ATVERSSPPE (118 aa)) is disordered. A compositionally biased stretch (basic residues) spans 318–352 (HHHQKGKKVPATHRRSSTPHARKTAGTRARTRARK). Residues 362-384 (KISKKDSGESKQKDETAGMERVF) are compositionally biased toward basic and acidic residues. Over residues 390 to 402 (NVRTCSSRASRTG) the composition is skewed to polar residues.

This is an uncharacterized protein from Treponema pallidum (strain Nichols).